A 210-amino-acid polypeptide reads, in one-letter code: Claudin-4 (210 aa).

Residues 1-7 (MASMGLQ) lie on the Cytoplasmic side of the membrane. The segment at 1–103 (MASMGLQVLG…GMLLSVVGGK (103 aa)) is interaction with EPHA2. A helical transmembrane segment spans residues 8 to 28 (VLGISLAVLGWLGIILSCALP). Over 29–81 (MWRVTAFIGSNIVTAQTSWEGLWMNCVVQSTGQMQCKMYDSMLALPQDLQAAR) the chain is Extracellular. Cys-54 and Cys-64 are disulfide-bonded. Residues 82 to 102 (ALMVISIIVGALGMLLSVVGG) traverse the membrane as a helical segment. Residues 103–116 (KCTNCMEDETVKAK) lie on the Cytoplasmic side of the membrane. A helical membrane pass occupies residues 117 to 137 (IMITAGAVFIVASMLIMVPVS). Topologically, residues 138–160 (WTAHNVIRDFYNPMVASGQKREM) are extracellular. Residues 161–181 (GASLYVGWAASGLLLLGGGLL) traverse the membrane as a helical segment. Residues 182–210 (CCSCPPRSNDKPYSAKYSAARSVPASNYV) lie on the Cytoplasmic side of the membrane. Residue Tyr-209 is modified to Phosphotyrosine; by EPHA2. The interval 209-210 (YV) is interactions with TJP1, TJP2 and TJP3.

Belongs to the claudin family. In terms of assembly, can form heteropolymeric strands with other claudins. Interacts with CLDN8. Interacts with CLDN1. Directly interacts with TJP1/ZO-1, TJP2/ZO-2 and TJP3/ZO-3. Interacts with EPHA2; phosphorylates CLDN4 and may regulate tight junctions. Phosphorylated. Phosphorylation by EPHA2 is stimulated by EFNA1 and alters interaction with TJP1. As to expression, expressed primarily in lung and kidney. Present in both cortical and medullar collecting ducts (at protein level).

Its subcellular location is the cell junction. It is found in the tight junction. It localises to the cell membrane. It carries out the reaction chloride(in) = chloride(out). It catalyses the reaction bromide(in) = bromide(out). The enzyme catalyses iodide(out) = iodide(in). The catalysed reaction is fluoride(in) = fluoride(out). Its function is as follows. Can associate with other claudins to regulate tight junction structural and functional strand dynamics. May coassemble with CLDN8 into tight junction strands containing anion-selective channels that convey paracellular chloride permeability in renal collecting ducts. May integrate into CLDN3 strands to modulate localized tight junction barrier properties. May disrupt strand assembly of channel-forming CLDN2 and CLDN15 and inhibit cation conductance. Cannot form tight junction strands on its own. The chain is Claudin-4 from Mus musculus (Mouse).